A 523-amino-acid chain; its full sequence is MNAATSITQAPVADVELKQLNEATAQRESATNNPNDSSSIDERPIHSALSESQRSALLAVASFAAAISPASTTTYYPAITTLARDLDVSITQINLSISVYQIFQGLAPTVAAALSDRYGRRPVYLGCLFINIAANLGLARQENYTSLMVLRCLQSSSSSGTVALGQAVMDDLVTSEERGKYMAYLTLGLVMGPALGPLIGGLLSQYLGWRAIFWFLMILGGFFFVLTFTFFRETNRSIVGDGSVPPPKWNRSLVQILRKDKLVPNRESLQKKRIGVNPLASVQILCNKENFIVCMYGALLFGGYASVISIFATQLEERYGYSQVQVGLCYLPFGVGSILSRWTAGKMIDWNFKREAEKQGLKIVKNRQQDLSQYDIEKARLTISFPMIFATCGFVVAYGWLMQYNTHVASVLVIVFLIANVFTGVLIANSALLNDLNPGNGAALGAAMNLTRCLMGAGGVAAVTPLINKIGIGYTATATAGVWLAVLPALYVVYSKGYTWRKAALRSSAQGRGEGSRVASPSP.

The disordered stretch occupies residues 19–42; the sequence is QLNEATAQRESATNNPNDSSSIDE. Over residues 21–38 the composition is skewed to polar residues; it reads NEATAQRESATNNPNDSS. N-linked (GlcNAc...) asparagine glycans are attached at residues N35, N94, and N143. A run of 2 helical transmembrane segments spans residues 183–203 and 211–231; these read AYLT…GGLL and AIFW…FTFF. N-linked (GlcNAc...) asparagine glycosylation is found at N235 and N250. 6 consecutive transmembrane segments (helical) span residues 291-311, 319-339, 381-401, 408-428, 443-463, and 470-490; these read FIVC…ISIF, YGYS…GSIL, LTIS…YGWL, VASV…VLIA, ALGA…VAAV, and IGIG…LPAL.

This sequence belongs to the major facilitator superfamily.

It is found in the membrane. Its function is as follows. MFS-type transporter; part of the gene cluster that mediates the biosynthesis of squalestatin S1 (SQS1, also known as zaragozic acid A), a heavily oxidized fungal polyketide that offers potent cholesterol lowering activity by targeting squalene synthase (SS). The protein is MFS-type transporter R5 of Phoma sp. (strain ATCC 20986 / MF5453).